Reading from the N-terminus, the 287-residue chain is Protease HtpX (287 aa).

A run of 2 helical transmembrane segments spans residues isoleucine 4 to isoleucine 24 and glycine 33 to isoleucine 53. Histidine 139 contacts Zn(2+). Glutamate 140 is a catalytic residue. Residue histidine 143 coordinates Zn(2+). The next 2 membrane-spanning stretches (helical) occupy residues leucine 154–isoleucine 174 and alanine 195–phenylalanine 215. Glutamate 220 provides a ligand contact to Zn(2+).

This sequence belongs to the peptidase M48B family. It depends on Zn(2+) as a cofactor.

It localises to the cell inner membrane. This chain is Protease HtpX, found in Shewanella baltica (strain OS223).